A 115-amino-acid chain; its full sequence is Androgen-binding protein homolog (115 aa).

The first 23 residues, 1–23, serve as a signal peptide directing secretion; sequence MKGTLLLLALLVTGELGFQTTEA.

Belongs to the secretoglobin family.

Its subcellular location is the secreted. The sequence is that of Androgen-binding protein homolog from Mesocricetus auratus (Golden hamster).